Consider the following 507-residue polypeptide: Dihydrolipoyl dehydrogenase 2, mitochondrial (507 aa).

Residues 1–36 (MAMASLARRKAYFLTRNISNSPTDAFRFSFSLTRGF) constitute a mitochondrion transit peptide. Residues 73-82 (EKRGALGGTC), lysine 91, glycine 155, and 184-186 (TGS) each bind FAD. Cysteine 82 and cysteine 87 are oxidised to a cystine. Residues 221-228 (GAGYIGLE), glutamate 244, valine 278, and glycine 313 each bind NAD(+). Residues aspartate 354 and 360 to 363 (MLAH) each bind FAD. The Proton acceptor role is filled by histidine 486.

The protein belongs to the class-I pyridine nucleotide-disulfide oxidoreductase family. Homodimer. Part of both the glycine cleavage system composed of four proteins: P, T, L and H and of the pyruvate dehydrogenase complex containing multiple copies of three enzymatic components: pyruvate dehydrogenase (E1), dihydrolipoamide acetyltransferase (E2) and lipoamide dehydrogenase (E3). FAD is required as a cofactor. In terms of processing, S-nytrosylated at unknown positions. Preferentially expressed in roots, flowers and siliques and at a lower level in stems and leaves.

Its subcellular location is the mitochondrion matrix. It catalyses the reaction N(6)-[(R)-dihydrolipoyl]-L-lysyl-[protein] + NAD(+) = N(6)-[(R)-lipoyl]-L-lysyl-[protein] + NADH + H(+). Functionally, lipoamide dehydrogenase is a component of the glycine decarboxylase (GDC) or glycine cleavage system as well as of the alpha-ketoacid dehydrogenase complexes. LPD1 is probably the protein most often associated with the glycine decarboxylase complex while LPD2 is probably incorporated into alpha-ketoacid dehydrogenase complexes. In Arabidopsis thaliana (Mouse-ear cress), this protein is Dihydrolipoyl dehydrogenase 2, mitochondrial (LPD2).